The chain runs to 210 residues: 3-hexulose-6-phosphate synthase (210 aa).

Belongs to the HPS/KGPDC family. HPS subfamily.

It carries out the reaction D-ribulose 5-phosphate + formaldehyde = D-arabino-hex-3-ulose 6-phosphate. The protein operates within one-carbon metabolism; formaldehyde assimilation via RuMP pathway; D-fructose 6-phosphate from D-ribulose 5-phosphate and formaldehyde: step 1/2. In terms of biological role, catalyzes the condensation of ribulose 5-phosphate with formaldehyde to form 3-hexulose 6-phosphate. The chain is 3-hexulose-6-phosphate synthase from Staphylococcus aureus (strain NCTC 8325 / PS 47).